A 353-amino-acid polypeptide reads, in one-letter code: Stomatin-like protein 2, mitochondrial (353 aa).

The N-terminal 28 residues, 1–28 (MLARAARGTGALLLRGSVQASGRVPRRA), are a transit peptide targeting the mitochondrion. S17 carries the phosphoserine; by PKC/PRKCZ modification. Y124 carries the post-translational modification Phosphotyrosine. An N6-acetyllysine; alternate modification is found at K145. K145 carries the N6-succinyllysine; alternate modification. The stretch at 215–252 (INVAEGKKQAQILASEAEKAEQINQAAGEASAVLAKAK) forms a coiled coil. The residue at position 233 (K233) is an N6-acetyllysine. The disordered stretch occupies residues 324–353 (VPGAQNSSQSRRDVQATDTSIEELGRVKLS). S330 bears the Phosphoserine mark.

The protein belongs to the band 7/mec-2 family. Forms homooligomers. Interacts with MFN2; may form heterooligomers. Interacts with PHB1 and PHB2; recruits them to cardiolipin-enriched mitochondrial membranes and stabilizes them. Interacts with CACNA2D2.

The protein resides in the cell membrane. It is found in the mitochondrion. Its subcellular location is the mitochondrion inner membrane. It localises to the mitochondrion intermembrane space. The protein localises to the membrane raft. The protein resides in the cytoplasm. It is found in the cytoskeleton. Functionally, mitochondrial protein that probably regulates the biogenesis and the activity of mitochondria. Stimulates cardiolipin biosynthesis, binds cardiolipin-enriched membranes where it recruits and stabilizes some proteins including prohibitin and may therefore act in the organization of functional microdomains in mitochondrial membranes. Through regulation of the mitochondrial function may play a role into several biological processes including cell migration, cell proliferation, T-cell activation, calcium homeostasis and cellular response to stress. May play a role in calcium homeostasis through negative regulation of calcium efflux from mitochondria. Required for mitochondrial hyperfusion a pro-survival cellular response to stress which results in increased ATP production by mitochondria. May also regulate the organization of functional domains at the plasma membrane and play a role in T-cell activation through association with the T-cell receptor signaling complex and its regulation. This chain is Stomatin-like protein 2, mitochondrial (Stoml2), found in Mus musculus (Mouse).